Here is a 372-residue protein sequence, read N- to C-terminus: Pre-small/secreted glycoprotein (372 aa).

Residues 1 to 32 (MEGLSLLQLPRDKFRKSSFFVWVIILFQKAFS) form the signal peptide. N-linked (GlcNAc...) asparagine; by host glycosylation occurs at N40. 2 disulfides stabilise this stretch: C108-C135 and C121-C147. N-linked (GlcNAc...) asparagine; by host glycans are attached at residues N204, N208, N238, N257, and N268. The disordered stretch occupies residues 320-340 (MRHRRELQREESPTGPPGSIR).

This sequence belongs to the filoviruses glycoprotein family. In terms of assembly, homodimer; disulfide-linked. The homodimers are linked by two disulfide bonds in a parallel orientation. As to quaternary structure, monomer. In terms of processing, this precursor is processed into mature sGP and delta-peptide by host furin or furin-like proteases. The cleavage site corresponds to the furin optimal cleavage sequence [KR]-X-[KR]-R. Post-translationally, N-glycosylated. O-glycosylated.

The protein resides in the secreted. Its function is as follows. Seems to possess an anti-inflammatory activity as it can reverse the barrier-decreasing effects of TNF alpha. Might therefore contribute to the lack of inflammatory reaction seen during infection in spite the of extensive necrosis and massive virus production. Does not seem to be involved in activation of primary macrophages. Does not seem to interact specifically with neutrophils. Viroporin that permeabilizes mammalian cell plasma membranes. It acts by altering permeation of ionic compounds and small molecules. This activity may lead to viral enterotoxic activity. This is Pre-small/secreted glycoprotein (GP) from Sudan ebolavirus (strain Boniface-76) (SEBOV).